The chain runs to 146 residues: NADH-quinone oxidoreductase subunit A (146 aa).

Helical transmembrane passes span 14–34 (FALF…GGFL), 68–88 (LVAM…AWAV), and 96–116 (IGFI…IYLV).

This sequence belongs to the complex I subunit 3 family. NDH-1 is composed of 13 different subunits. Subunits NuoA, H, J, K, L, M, N constitute the membrane sector of the complex.

The protein localises to the cell inner membrane. The enzyme catalyses a quinone + NADH + 5 H(+)(in) = a quinol + NAD(+) + 4 H(+)(out). In terms of biological role, NDH-1 shuttles electrons from NADH, via FMN and iron-sulfur (Fe-S) centers, to quinones in the respiratory chain. The immediate electron acceptor for the enzyme in this species is believed to be ubiquinone. Couples the redox reaction to proton translocation (for every two electrons transferred, four hydrogen ions are translocated across the cytoplasmic membrane), and thus conserves the redox energy in a proton gradient. This Pectobacterium atrosepticum (strain SCRI 1043 / ATCC BAA-672) (Erwinia carotovora subsp. atroseptica) protein is NADH-quinone oxidoreductase subunit A.